The following is a 452-amino-acid chain: Tissue alpha-L-fucosidase (452 aa).

A signal peptide spans 1–17 (MLLLLLLLLVAAAQAVA). Asn227, Asn254, Asn368, and Asn378 each carry an N-linked (GlcNAc...) asparagine glycan.

Belongs to the glycosyl hydrolase 29 family. Homotetramer.

It is found in the lysosome. It catalyses the reaction an alpha-L-fucoside + H2O = L-fucose + an alcohol. The catalysed reaction is a neolactoside IV(2)-alpha-Fuc-nLc4Cer(d18:1(4E)) + H2O = a neolactoside nLc4Cer(d18:1(4E)) + L-fucose. The enzyme catalyses a neolactoside IV(2)-alpha-Fuc-nLc4Cer(d18:0) + H2O = a neolactoside nLc4Cer(d18:0) + L-fucose. Alpha-L-fucosidase is responsible for hydrolyzing the alpha-1,6-linked fucose joined to the reducing-end N-acetylglucosamine of the carbohydrate moieties of glycoproteins. This Mus musculus (Mouse) protein is Tissue alpha-L-fucosidase (Fuca1).